The chain runs to 441 residues: Amino-acid acetyltransferase (441 aa).

The region spanning 295-434 (EQVRRATIND…QELYNYQRRS (140 aa)) is the N-acetyltransferase domain.

This sequence belongs to the acetyltransferase family. ArgA subfamily. As to quaternary structure, homohexamer.

It is found in the cytoplasm. It carries out the reaction L-glutamate + acetyl-CoA = N-acetyl-L-glutamate + CoA + H(+). The protein operates within amino-acid biosynthesis; L-arginine biosynthesis; N(2)-acetyl-L-ornithine from L-glutamate: step 1/4. This is Amino-acid acetyltransferase from Yersinia enterocolitica serotype O:8 / biotype 1B (strain NCTC 13174 / 8081).